Reading from the N-terminus, the 846-residue chain is uncharacterized protein (846 aa).

6 disordered regions span residues 159–217, 254–276, 332–414, 459–501, 556–651, and 803–846; these read VPTF…INHI, CNLN…SNSN, NKLN…PLSI, GSSI…SNSL, QQQQ…NFND, and TTTT…NKNK. The segment covering 163-217 has biased composition (low complexity); that stretch reads HNQNQNNNNQNNNQNNNNNNNNNNNNNNNNNNNNNNNSQNNNNNQNNNNNHINHI. Over residues 355–414 the composition is skewed to low complexity; the sequence is LQSPNSQSLANSSANISSNALNQSSSSQQQQPQSTSQQQQQQHKMNSSSGNISPPLPLSI. The span at 459 to 482 shows a compositional bias: polar residues; sequence GSSITPKNLSPLSSSAPNTPKQFA. 3 stretches are compositionally biased toward low complexity: residues 483–501, 568–642, and 811–846; these read SLSS…SNSL, QQQQ…QPNN, and NNNN…NKNK.

This is an uncharacterized protein from Dictyostelium discoideum (Social amoeba).